The following is an 869-amino-acid chain: Facilitated trehalose transporter Tret1 (869 aa).

2 disordered regions span residues 1–214 (MSGR…QKAT) and 258–315 (KESS…LIHR). Topologically, residues 1–404 (MSGRDNRGAG…VYRPTTNPIY (404 aa)) are cytoplasmic. Positions 25-43 (KLKEKLTRAGDDQGYHRVE) are enriched in basic and acidic residues. Low complexity-rich tracts occupy residues 44 to 57 (SNLSTSNTATSLDT), 79 to 92 (PQQQQQQQQRQQLR), and 118 to 127 (PFQQQQQRTP). 2 stretches are compositionally biased toward basic and acidic residues: residues 147–156 (EIREHRDRQQ) and 258–291 (KESSSEEEFHKTRREFQGRKHQSLDPRVTFKLDK). Phosphoserine occurs at positions 260, 261, 262, 332, and 334. Residues 336–368 (EDFHTSRQHFQQQRSISTDSRKSRRPYEMDEMG) form a disordered region. Residues 343-353 (QHFQQQRSIST) show a composition bias toward polar residues. Residues 354 to 368 (DSRKSRRPYEMDEMG) show a composition bias toward basic and acidic residues. A helical transmembrane segment spans residues 405–425 (IWTQVLAALSVSLGSLVVGFV). At 426 to 452 (SAYTSPALVSMTNRNMTSFEVTPQAAS) the chain is on the extracellular side. Asn440 carries an N-linked (GlcNAc...) asparagine glycan. The chain crosses the membrane as a helical span at residues 453–473 (WVGGIMPLAGLAGGIAGGPFI). At 474–485 (EYLGRRNTILAT) the chain is on the cytoplasmic side. A helical transmembrane segment spans residues 486-506 (AIPFIVSSLLIACAVNVAMVL). Over 507–509 (AGR) the chain is Extracellular. Residues 510-530 (FLAGFCVGIASLSLPVYLGET) form a helical membrane-spanning segment. Residues 531–536 (VQPEVR) are Cytoplasmic-facing. Residues 537–557 (GTLGLLPTAFGNIGILLCFVA) form a helical membrane-spanning segment. Residues 558–564 (GTYMDWS) are Extracellular-facing. Residues 565 to 585 (MLAFLGAALPVPFLILMFLIP) traverse the membrane as a helical segment. Over 586–654 (ETPRWFVSRG…NLKPLSISLG (69 aa)) the chain is Cytoplasmic. A helical transmembrane segment spans residues 655-675 (LMFFQQLSGINAVIFYTVSIF). Topologically, residues 676–685 (KDAGSTIDGN) are extracellular. Residues 686-706 (LCTIIVGIVNFMATFIATLLI) form a helical membrane-spanning segment. Topologically, residues 707–712 (DRAGRK) are cytoplasmic. The chain crosses the membrane as a helical span at residues 713-733 (ILLYVSNIAMIITLFVLGGFF). The Extracellular portion of the chain corresponds to 734–752 (YCKSHGQDVSQLGWLPLSC). Residues 753–773 (FVIYILGFSLGFGPIPWLMMG) traverse the membrane as a helical segment. Residues 774 to 779 (EILPSK) are Cytoplasmic-facing. Residues 780–800 (IRGSAASVATAFNWSCTFVVT) traverse the membrane as a helical segment. The Extracellular portion of the chain corresponds to 801 to 813 (KTFQDMIDFMGAH). The chain crosses the membrane as a helical span at residues 814 to 834 (GAFWLFGSICFIGLFFVILYV). Residues 835 to 869 (PETQGKTLEDIERKMMGRVRRMSSVANMKPLAFNM) are Cytoplasmic-facing. 2 positions are modified to phosphoserine: Ser857 and Ser858.

This sequence belongs to the major facilitator superfamily. Sugar transporter (TC 2.A.1.1) family. Trehalose transporter subfamily.

It is found in the cell membrane. In terms of biological role, low-capacity facilitative transporter for trehalose. Does not transport maltose, sucrose or lactose. Mediates the bidirectional transfer of trehalose. Responsible for the transport of trehalose synthesized in the fat body and the incorporation of trehalose into other tissues that require a carbon source, thereby regulating trehalose levels in the hemolymph. This chain is Facilitated trehalose transporter Tret1, found in Drosophila persimilis (Fruit fly).